The chain runs to 347 residues: O-methyltransferase aunE (347 aa).

Trp-166 lines the S-adenosyl-L-methionine pocket. His-265 serves as the catalytic Proton acceptor.

This sequence belongs to the class I-like SAM-binding methyltransferase superfamily. Cation-independent O-methyltransferase family.

It functions in the pathway secondary metabolite biosynthesis. Its function is as follows. O-methyltransferase; part of the gene cluster that mediates the biosynthesis of aurasperone B, a dimeric gamma-naphthopyrone. The first step in the biosynthesis of aurasperone B is the production of gamma-naphthopyrone precursor YWA1 by the non-reducing polyketide synthase albA, via condensation of one acetyl-CoA starter unit with 6 malonyl-CoA units. YWA1 is then methylated by aunE at position C-6 to yield foncesin which is further methylated at position C-8 by aunD to produce fonsecin B. A key enzyme in the biosynthetic pathway is the cytochrome P450 monooxygenase aunB which catalyzes the oxidative dimerization of fonsecin B to aurasperone B. AunB also catalyzes the oxidative dimerization of rubrofusarin B into aurasperone A. The sequence is that of O-methyltransferase aunE from Aspergillus niger (strain ATCC 1015 / CBS 113.46 / FGSC A1144 / LSHB Ac4 / NCTC 3858a / NRRL 328 / USDA 3528.7).